Here is a 224-residue protein sequence, read N- to C-terminus: Ribose-5-phosphate isomerase A (224 aa).

Substrate-binding positions include 26 to 29 (TGST), 81 to 84 (DGAD), and 94 to 97 (KGGG). The Proton acceptor role is filled by E103. Residue K121 participates in substrate binding.

It belongs to the ribose 5-phosphate isomerase family. In terms of assembly, homodimer.

It carries out the reaction aldehydo-D-ribose 5-phosphate = D-ribulose 5-phosphate. It participates in carbohydrate degradation; pentose phosphate pathway; D-ribose 5-phosphate from D-ribulose 5-phosphate (non-oxidative stage): step 1/1. In terms of biological role, catalyzes the reversible conversion of ribose-5-phosphate to ribulose 5-phosphate. In Listeria monocytogenes serotype 4b (strain CLIP80459), this protein is Ribose-5-phosphate isomerase A.